A 657-amino-acid polypeptide reads, in one-letter code: Tyrosine-protein phosphatase vhp-1 (657 aa).

The Rhodanese domain maps to 21–151 (APDTTLVVDC…FAQQYPQLCE (131 aa)). The Tyrosine-protein phosphatase domain occupies 175 to 318 (GITLITPNIY…LLEYENVLIK (144 aa)). Cysteine 262 (phosphocysteine intermediate) is an active-site residue. Disordered regions lie at residues 353–426 (SNCV…MDLG), 539–563 (VPAGSSSISTPSGSQSTPASASSSA), and 581–657 (PAST…PCHQ). Residues 366–405 (SPSSPSVSEGSAASEPETSSSAASSSSTASAPPSMPSTSE) are compositionally biased toward low complexity. Over residues 406–419 (QGTSSGTVNVNGKR) the composition is skewed to polar residues. 2 stretches are compositionally biased toward low complexity: residues 542-563 (GSSSISTPSGSQSTPASASSSA) and 581-597 (PASTSTPASSTPGTSRA).

This sequence belongs to the protein-tyrosine phosphatase family. Non-receptor class dual specificity subfamily. May interact with pmk-3. Expressed in the pharynx, intestine, neurons and vulval hypodermal cells.

The catalysed reaction is O-phospho-L-tyrosyl-[protein] + H2O = L-tyrosyl-[protein] + phosphate. Functionally, acts preferentially on the c-Jun N-terminal kinase (JNK) and p38 MAPKs. Plays an important role in the heavy metal stress response and in axon regeneration by negatively regulating the kgb-1 (JNK-like) and the pmk-1 (p38-type) MAPK signaling pathways. This Caenorhabditis elegans protein is Tyrosine-protein phosphatase vhp-1 (vhp-1).